The following is a 150-amino-acid chain: D-galactose-binding lectin (150 aa).

D-galactose contacts are provided by H16 and G19. N26 is a glycosylation site (N-linked (GlcNAc...) asparagine). D-galactose-binding positions include 35-37 (DIH), H64, and G67. N74 is a glycosylation site (N-linked (GlcNAc...) asparagine). D-galactose contacts are provided by residues 83 to 85 (DRH), H108, and G111. N-linked (GlcNAc...) asparagine glycosylation occurs at N118. 127–129 (DEH) is a D-galactose binding site.

As to quaternary structure, oligomerizes in solution. Post-translationally, the N-terminus is blocked. As to expression, expressed in mantle. Expressed 51 and 1.6 fold in mantle and gonads, respectively, relative to that in hemocytes. Expressed at a much lower level in other tissues tested including gill, muscle and hepatopancreas.

Hemagglutinating activity does not require Ca(2+) ions. Hemagglutinating activity is inhibited by porcine stomach mucin (PSM), bovine submaxillary mucin (BSM) and fetuin. Agglutination of V.proteolyticus bacteria is inhibited by D-galactose, but not by D-glucose. Fungal binding is inhibited by D-galactose, but not by pathogen-associated molecular patterns (PAMPs) including lipopolysaccharide (LPS), peptidoglycan and beta-glucan. In terms of biological role, D-galactose-binding lectin. Binds both alpha and beta anomer of galactose (Gal). Binds strongly to branched beta-Gal-terminated glycans and weakly to unbranched glycans with alpha-Gal on the end of chains. Has strong affinity for both Gal and GalNAc. Binds glycoproteins containing mucin-type chains. Has hemagglutinating activity towards human group A erythrocytes. Has hemagglutinating activity towards rabbit erythrocytes. Agglutinates V.proteolyticus bacteria. Binds strongly to fungi including species from genera Aspergillus, Alternaria, Fusarium and Haematonectria, and to a lesser extent to fungi from genera Trichoderma. Decreases conidia germination and hyphal growth of fungi. At high concentration, stimulates secretion of cytokines TNF-alpha and IFN-gamma from human peripheral blood cells, and at low concentration reduces hyperexpression of cytokine IL-10 in these cells, indicative of immunomodulatory capability. However, has no effect on IL-4 production. Recognizes pathogen-associated molecular patterns (PAMPs) and binds to peptidoglycan from S.aureus, but has only little binding to beta-1,3-glucan from E.gracilis and lipopolysaccharide (LPS) from E.coli. May be involved in innate immunity acting as an antibacterial or antifungal agent recognizing carbohydrate ligands on the surface of pathogens. The polypeptide is D-galactose-binding lectin (Mytilus trossulus (Blue mussel)).